The primary structure comprises 595 residues: Peptidyl-prolyl cis-trans isomerase CYP65 (595 aa).

A U-box domain is found at 35–108 (KSLPYYCCAL…GEYHCPVLNK (74 aa)). Positions 342 to 496 (KKGYVQFQTT…EEIKIIEASV (155 aa)) constitute a PPIase cyclophilin-type domain. Disordered stretches follow at residues 503-546 (ELDE…GGGG) and 576-595 (SKKRKTTASASTGFKDFSSW). Residues 510-525 (KEKAEKEKNEDKDIEK) are compositionally biased toward basic and acidic residues. Residues 582 to 595 (TASASTGFKDFSSW) are compositionally biased toward polar residues.

Belongs to the cyclophilin-type PPIase family. PPIL2 subfamily. In terms of tissue distribution, expressed in leaves, flower buds and stems. Lower levels of expression in roots.

It is found in the nucleus. The enzyme catalyses [protein]-peptidylproline (omega=180) = [protein]-peptidylproline (omega=0). It catalyses the reaction S-ubiquitinyl-[E2 ubiquitin-conjugating enzyme]-L-cysteine + [acceptor protein]-L-lysine = [E2 ubiquitin-conjugating enzyme]-L-cysteine + N(6)-ubiquitinyl-[acceptor protein]-L-lysine.. Its pathway is protein modification; protein ubiquitination. In terms of biological role, may catalyze the cis-trans isomerization of proline imidic peptide bonds in oligopeptides thereby assisting the folding of proteins. May also function as a chaperone, playing a role in intracellular transport of proteins. May also have a protein ubiquitin ligase activity acting as an E3 ubiquitin protein ligase or as a ubiquitin-ubiquitin ligase promoting elongation of ubiquitin chains on proteins. This chain is Peptidyl-prolyl cis-trans isomerase CYP65 (CYP65), found in Arabidopsis thaliana (Mouse-ear cress).